The primary structure comprises 385 residues: S-adenosylmethionine synthase (385 aa).

His-16 provides a ligand contact to ATP. Position 18 (Asp-18) interacts with Mg(2+). A K(+)-binding site is contributed by Glu-44. L-methionine-binding residues include Glu-57 and Gln-100. Residues 100–110 (QSPDINQGVDR) form a flexible loop region. ATP is bound by residues 164–166 (DGK), 230–231 (KF), Asp-239, 245–246 (RK), Ala-262, and Lys-266. Residue Asp-239 participates in L-methionine binding. Residue Lys-270 coordinates L-methionine.

Belongs to the AdoMet synthase family. As to quaternary structure, homotetramer; dimer of dimers. It depends on Mg(2+) as a cofactor. Requires K(+) as cofactor.

It is found in the cytoplasm. It catalyses the reaction L-methionine + ATP + H2O = S-adenosyl-L-methionine + phosphate + diphosphate. It participates in amino-acid biosynthesis; S-adenosyl-L-methionine biosynthesis; S-adenosyl-L-methionine from L-methionine: step 1/1. Catalyzes the formation of S-adenosylmethionine (AdoMet) from methionine and ATP. The overall synthetic reaction is composed of two sequential steps, AdoMet formation and the subsequent tripolyphosphate hydrolysis which occurs prior to release of AdoMet from the enzyme. In Helicobacter pylori (strain J99 / ATCC 700824) (Campylobacter pylori J99), this protein is S-adenosylmethionine synthase.